The sequence spans 275 residues: Bifunctional protein FolD (275 aa).

Residues 161-163 (GRS), serine 186, and threonine 227 each bind NADP(+).

This sequence belongs to the tetrahydrofolate dehydrogenase/cyclohydrolase family. In terms of assembly, homodimer.

The enzyme catalyses (6R)-5,10-methylene-5,6,7,8-tetrahydrofolate + NADP(+) = (6R)-5,10-methenyltetrahydrofolate + NADPH. It catalyses the reaction (6R)-5,10-methenyltetrahydrofolate + H2O = (6R)-10-formyltetrahydrofolate + H(+). Its pathway is one-carbon metabolism; tetrahydrofolate interconversion. In terms of biological role, catalyzes the oxidation of 5,10-methylenetetrahydrofolate to 5,10-methenyltetrahydrofolate and then the hydrolysis of 5,10-methenyltetrahydrofolate to 10-formyltetrahydrofolate. The sequence is that of Bifunctional protein FolD from Parafrankia sp. (strain EAN1pec).